The primary structure comprises 336 residues: MGGDWQELAQAAVIGLLFAFLVAKLISTVIAFKEDNLRITRSTPTSPSAADTPAAPAPPPASLDGGHGDTSDGSGSDSDSDWEGVESTELDEEFSAASAFVAASAASGTSVPEQAQLQLYGLYKIATEGPCTAPQPSALKLKARAKWNAWHKLGAMPTEEAMQKYITVVDELFPNWSMGSSTKRKDEDTTVSASSSKGPMGPVFSSLMYEEEDQGNDSELGDIHVSAREGAIDDIAKHLAAGVEVNMRDSEGRTPLHWAVDRGHLNSVEILVNANADVNAQDNEGQTALHYAVLCEREDIAELLVKHHADVQIKDEDGNTVRELCPSSWSFMNLAN.

A helical; Signal-anchor transmembrane segment spans residues 12-32 (AVIGLLFAFLVAKLISTVIAF). A disordered region spans residues 40 to 88 (TRSTPTSPSAADTPAAPAPPPASLDGGHGDTSDGSGSDSDSDWEGVEST). The segment covering 42 to 54 (STPTSPSAADTPA) has biased composition (low complexity). Residues 78 to 88 (SDSDWEGVEST) are compositionally biased toward acidic residues. Positions 90 to 178 (LDEEFSAASA…VDELFPNWSM (89 aa)) constitute an ACB domain. An acyl-CoA contacts are provided by residues 120-124 (YGLYK), lysine 142, lysine 146, and tyrosine 165. A glycan (N-linked (GlcNAc...) asparagine) is linked at asparagine 175. Positions 179–202 (GSSTKRKDEDTTVSASSSKGPMGP) are disordered. N-linked (GlcNAc...) asparagine glycosylation is present at asparagine 216. 2 ANK repeats span residues 251–280 (EGRT…DVNA) and 284–313 (EGQT…DVQI).

The protein belongs to the ACBP family. Highly expressed in leaves. Expressed at low levels in roots and seeds.

It localises to the endoplasmic reticulum membrane. In terms of biological role, binds medium- and long-chain acyl-CoA esters with high affinity. Can interact in vitro with palmitoyl-CoA, linoleoyl-CoA and linolenoyl-CoA. Binds phosphatidic acid (PA) and phosphatidylcholine (PC) in vitro. May play a role in the biosynthesis of phospholipids. The polypeptide is Acyl-CoA-binding domain-containing protein 4 (Oryza sativa subsp. japonica (Rice)).